A 210-amino-acid polypeptide reads, in one-letter code: Histidine biosynthesis bifunctional protein HisIE (210 aa).

The segment at methionine 1–serine 106 is phosphoribosyl-AMP cyclohydrolase. The interval valine 107–tryptophan 210 is phosphoribosyl-ATP pyrophosphohydrolase.

This sequence in the N-terminal section; belongs to the PRA-CH family. The protein in the C-terminal section; belongs to the PRA-PH family.

Its subcellular location is the cytoplasm. The enzyme catalyses 1-(5-phospho-beta-D-ribosyl)-ATP + H2O = 1-(5-phospho-beta-D-ribosyl)-5'-AMP + diphosphate + H(+). It carries out the reaction 1-(5-phospho-beta-D-ribosyl)-5'-AMP + H2O = 1-(5-phospho-beta-D-ribosyl)-5-[(5-phospho-beta-D-ribosylamino)methylideneamino]imidazole-4-carboxamide. It functions in the pathway amino-acid biosynthesis; L-histidine biosynthesis; L-histidine from 5-phospho-alpha-D-ribose 1-diphosphate: step 2/9. The protein operates within amino-acid biosynthesis; L-histidine biosynthesis; L-histidine from 5-phospho-alpha-D-ribose 1-diphosphate: step 3/9. This is Histidine biosynthesis bifunctional protein HisIE (hisI) from Staphylococcus aureus (strain COL).